We begin with the raw amino-acid sequence, 239 residues long: MIKVLIVDDEPLARENLRIFLQEQSDIEIVGECSNAVEGIGAVHKLRPDVLFLDIQMPRISGLEMVGMLDPEHRPYIVFLTAFDEYAIKAFEEHAFDYLLKPIDEARLEKTLARLRQERSKQDVSLLPENQQALKFIPCTGHSRIYLLQMKDVAFVSSRMSGVYVTSHEGKEGFTELTLRTLESRTPLLRCHRQYLVNLAHLQEIRLEDNGQAELILRNGLTVPVSRRYLKSLKEAIGL.

The 114-residue stretch at 3 to 116 (KVLIVDDEPL…RLEKTLARLR (114 aa)) folds into the Response regulatory domain. Residue Asp-54 is modified to 4-aspartylphosphate. The 103-residue stretch at 137–239 (IPCTGHSRIY…LKSLKEAIGL (103 aa)) folds into the HTH LytTR-type domain.

Post-translationally, phosphorylated by BtsS.

In terms of biological role, member of the two-component regulatory system BtsS/BtsR. BtsR regulates expression of btsT by binding to its promoter region. This chain is Transcriptional regulatory protein BtsR, found in Shigella flexneri.